A 280-amino-acid chain; its full sequence is Eukaryotic translation initiation factor 3 subunit F-1 (280 aa).

Positions 8–138 (VRVHPVVLFQ…LRAYVCIQLG (131 aa)) constitute an MPN domain.

Belongs to the eIF-3 subunit F family. As to quaternary structure, component of the eukaryotic translation initiation factor 3 (eIF-3) complex. The eIF-3 complex interacts with pix.

It is found in the cytoplasm. Its function is as follows. Component of the eukaryotic translation initiation factor 3 (eIF-3) complex, which is involved in protein synthesis of a specialized repertoire of mRNAs and, together with other initiation factors, stimulates binding of mRNA and methionyl-tRNAi to the 40S ribosome. The eIF-3 complex specifically targets and initiates translation of a subset of mRNAs involved in cell proliferation. This Drosophila ananassae (Fruit fly) protein is Eukaryotic translation initiation factor 3 subunit F-1.